Reading from the N-terminus, the 289-residue chain is Probable phosphoribulokinase (289 aa).

An ATP-binding site is contributed by 12-20 (GSSGAGTTT).

The protein belongs to the phosphoribulokinase family.

It catalyses the reaction D-ribulose 5-phosphate + ATP = D-ribulose 1,5-bisphosphate + ADP + H(+). The protein is Probable phosphoribulokinase (prkB) of Escherichia coli (strain K12).